The sequence spans 227 residues: Ornithine decarboxylase antizyme 1 (227 aa).

The protein belongs to the ODC antizyme family. Interacts with ODC1 and thereby sterically blocks ODC homodimerization. Forms a ternary complex with PSMB4 and OAZ1 before PSMB4 is incorporated into the 20S proteasome. Interacts with AZIN2; this interaction disrupts the interaction between the antizyme and ODC1. Interacts with FAM171A1.

Its function is as follows. Ornithine decarboxylase (ODC) antizyme protein that negatively regulates ODC activity and intracellular polyamine biosynthesis and uptake in response to increased intracellular polyamine levels. Binds to ODC monomers, inhibiting the assembly of the functional ODC homodimer, and targets the monomers for ubiquitin-independent proteolytic destruction by the 26S proteasome. Triggers ODC degradation by inducing the exposure of a cryptic proteasome-interacting surface of ODC. Stabilizes AZIN2 by interfering with its ubiquitination. Also inhibits cellular uptake of polyamines by inactivating the polyamine uptake transporter. SMAD1/OAZ1/PSMB4 complex mediates the degradation of the CREBBP/EP300 repressor SNIP1. Involved in the translocation of AZIN2 from ER-Golgi intermediate compartment (ERGIC) to the cytosol. In Rattus norvegicus (Rat), this protein is Ornithine decarboxylase antizyme 1 (Oaz1).